We begin with the raw amino-acid sequence, 985 residues long: Na(+)/H(+) antiporter (985 aa).

Over 1–12 the chain is Cytoplasmic; that stretch reads MAIWEQLEVSKA. The chain crosses the membrane as a helical span at residues 13-33; it reads HVAYACVGVFSSIFSLVSLYV. Residues 34–36 lie on the Extracellular side of the membrane; sequence KEK. A helical transmembrane segment spans residues 37–57; it reads LYIGESTVAGIFGLIVGPVCL. Topologically, residues 58-70 are cytoplasmic; that stretch reads NWFNPLKWGNSDS. A helical membrane pass occupies residues 71–91; the sequence is ITLEITRIVLCLQIFAVAVEL. Topologically, residues 92–105 are extracellular; it reads PRKYMLKHWVSVTM. The helical transmembrane segment at 106–126 threads the bilayer; sequence LLLPVMTAGWLIIGLFVWILI. The Cytoplasmic portion of the chain corresponds to 127–128; that stretch reads PG. The chain crosses the membrane as a helical span at residues 129–149; that stretch reads LNFSASLLISACITATDPILA. Residues 150–176 are Extracellular-facing; it reads QSVVSGKFAQRVPGHLRNLLSAESGCN. A helical membrane pass occupies residues 177–197; the sequence is DGMAFPFLFLSMNLILHPGNG. Residues 198-203 are Cytoplasmic-facing; it reads REIVKD. A helical transmembrane segment spans residues 204 to 224; sequence WICVTILYECLFGCLLGCFIG. The Extracellular portion of the chain corresponds to 225–244; that stretch reads YVGRITIRFAEKKNIIDRES. Residues 245–265 form a helical membrane-spanning segment; the sequence is FLAFYVVLAFMCAGFGSILGV. Topologically, residues 266 to 294 are cytoplasmic; that stretch reads DDLLVSFAAGATFAWDGWFSQKTQESNVS. Residues 295-315 form a helical membrane-spanning segment; that stretch reads TVIDLLLNYAYFIYFGAIIPW. Topologically, residues 316–319 are extracellular; the sequence is SQFN. Residues 320–340 form a helical membrane-spanning segment; the sequence is NGEIGTNVWRLIILSIVVIFL. Over 341 to 361 the chain is Cytoplasmic; it reads RRIPAVMILRPLIPDIKSWRE. The helical transmembrane segment at 362 to 382 threads the bilayer; it reads ALFVGHFGPIGVGAIFAAILA. The Extracellular portion of the chain corresponds to 383 to 410; that stretch reads RGELESTFSDEPTPLNVVPSKEESKHWQ. The helical transmembrane segment at 411–431 threads the bilayer; sequence LIACIWPITCFFIVTSIIVHG. Topologically, residues 432–985 are cytoplasmic; it reads SSVAIITLGR…ALSKTLGLNK (554 aa). Disordered stretches follow at residues 489–701 and 726–760; these read MTLS…KPGT and DRNE…GGRL. Residues 517-526 show a composition bias toward polar residues; sequence NNDQIGSVAT. Residues 538-558 show a composition bias toward basic residues; it reads PRRRKLSRKEKRLNRRQKLRN. 2 stretches are compositionally biased toward basic and acidic residues: residues 559-572 and 580-593; these read KGRE…KNEM and DLGR…KEAR. Ser568 carries the phosphoserine modification. Over residues 637-646 the composition is skewed to low complexity; it reads SFESSERSSS. A compositionally biased stretch (acidic residues) spans 661–675; it reads EETESEIESEDEMEN. A compositionally biased stretch (basic and acidic residues) spans 676–698; sequence ESERSMASSEERRIRKMKEEEMK. Residues 743-756 show a composition bias toward low complexity; it reads SSLTTTMTNLSSSS. Residue Thr765 is modified to Phosphothreonine. A phosphoserine mark is found at Ser768 and Ser774. Residues 812–985 form a disordered region; the sequence is INPHKSDDDK…ALSKTLGLNK (174 aa). Composition is skewed to basic and acidic residues over residues 815–828 and 854–863; these read HKSD…RPRN and DEEKAIEGPS. The segment covering 887 to 920 has biased composition (acidic residues); sequence LDLEDEPSSEEDLGDSYNMDDSEDYDDNAYESET. Low complexity predominate over residues 970 to 979; it reads SAAVKSALSK.

It belongs to the fungal Na(+)/H(+) exchanger family.

The protein localises to the cell membrane. In terms of biological role, sodium export from cell, takes up external protons in exchange for internal sodium ions. Also capable of exporting potassium ions. This Saccharomyces cerevisiae (strain ATCC 204508 / S288c) (Baker's yeast) protein is Na(+)/H(+) antiporter (NHA1).